A 266-amino-acid chain; its full sequence is Glucosamine-6-phosphate deaminase (266 aa).

The Proton acceptor; for enolization step role is filled by D72. D141 (for ring-opening step) is an active-site residue. Catalysis depends on H143, which acts as the Proton acceptor; for ring-opening step. The active-site For ring-opening step is the E148.

This sequence belongs to the glucosamine/galactosamine-6-phosphate isomerase family. NagB subfamily. In terms of assembly, homohexamer.

The catalysed reaction is alpha-D-glucosamine 6-phosphate + H2O = beta-D-fructose 6-phosphate + NH4(+). Its pathway is amino-sugar metabolism; N-acetylneuraminate degradation; D-fructose 6-phosphate from N-acetylneuraminate: step 5/5. Allosterically activated by N-acetylglucosamine 6-phosphate (GlcNAc6P). Its function is as follows. Catalyzes the reversible isomerization-deamination of glucosamine 6-phosphate (GlcN6P) to form fructose 6-phosphate (Fru6P) and ammonium ion. The protein is Glucosamine-6-phosphate deaminase of Salmonella typhimurium (strain LT2 / SGSC1412 / ATCC 700720).